The primary structure comprises 329 residues: Cathepsin K (329 aa).

A signal peptide spans 1–15; that stretch reads MWGLKVLLLPVVSFA. A propeptide spans 16–114 (activation peptide); the sequence is LHPEEILDTQ…TLYIPDWEGR (99 aa). N-linked (GlcNAc...) asparagine glycosylation occurs at N103. 2 cysteine pairs are disulfide-bonded: C136/C177 and C170/C210. The active site involves C139. N268 is a glycosylation site (N-linked (GlcNAc...) asparagine). Cysteines 269 and 318 form a disulfide. Active-site residues include H276 and N296.

It belongs to the peptidase C1 family. In terms of tissue distribution, predominantly expressed in osteclasts (bones).

It localises to the lysosome. The protein resides in the secreted. Its subcellular location is the apical cell membrane. The catalysed reaction is Broad proteolytic activity. With small-molecule substrates and inhibitors, the major determinant of specificity is P2, which is preferably Leu, Met &gt; Phe, and not Arg.. In terms of biological role, thiol protease involved in osteoclastic bone resorption and may participate partially in the disorder of bone remodeling. Displays potent endoprotease activity against fibrinogen at acid pH. May play an important role in extracellular matrix degradation. Involved in the release of thyroid hormone thyroxine (T4) by limited proteolysis of TG/thyroglobulin in the thyroid follicle lumen. This Oryctolagus cuniculus (Rabbit) protein is Cathepsin K (CTSK).